The primary structure comprises 149 residues: Large ribosomal subunit protein bL9 (149 aa).

Belongs to the bacterial ribosomal protein bL9 family.

In terms of biological role, binds to the 23S rRNA. This Campylobacter curvus (strain 525.92) protein is Large ribosomal subunit protein bL9.